The following is a 176-amino-acid chain: uncharacterized protein (176 aa).

This is an uncharacterized protein from Schizosaccharomyces pombe (strain 972 / ATCC 24843) (Fission yeast).